A 142-amino-acid chain; its full sequence is RNA-directed DNA polymerase homolog (142 aa).

Its subcellular location is the mitochondrion. It catalyses the reaction RNA(n) + a ribonucleoside 5'-triphosphate = RNA(n+1) + diphosphate. The chain is RNA-directed DNA polymerase homolog from Oenothera berteroana (Bertero's evening primrose).